Reading from the N-terminus, the 388-residue chain is LL-diaminopimelate aminotransferase (388 aa).

Residues Y15 and G40 each coordinate substrate. Residues Y69, 103–104 (SK), Y128, N178, Y209, and 237–239 (SLS) contribute to the pyridoxal 5'-phosphate site. Positions 104, 128, and 178 each coordinate substrate. An N6-(pyridoxal phosphate)lysine modification is found at K240. R248 is a pyridoxal 5'-phosphate binding site. R366 is a binding site for substrate.

It belongs to the class-I pyridoxal-phosphate-dependent aminotransferase family. LL-diaminopimelate aminotransferase subfamily. Homodimer. The cofactor is pyridoxal 5'-phosphate.

It catalyses the reaction (2S,6S)-2,6-diaminopimelate + 2-oxoglutarate = (S)-2,3,4,5-tetrahydrodipicolinate + L-glutamate + H2O + H(+). Its pathway is amino-acid biosynthesis; L-lysine biosynthesis via DAP pathway; LL-2,6-diaminopimelate from (S)-tetrahydrodipicolinate (aminotransferase route): step 1/1. Its function is as follows. Involved in the synthesis of meso-diaminopimelate (m-DAP or DL-DAP), required for both lysine and peptidoglycan biosynthesis. Catalyzes the direct conversion of tetrahydrodipicolinate to LL-diaminopimelate. Can also use m-DAP instead of LL-DAP as the amino-group donor. In Syntrophobacter fumaroxidans (strain DSM 10017 / MPOB), this protein is LL-diaminopimelate aminotransferase.